A 418-amino-acid chain; its full sequence is E3 ubiquitin-protein ligase makorin-2 (418 aa).

2 consecutive C3H1-type zinc fingers follow at residues 2–29 (NTKH…HDLA) and 31–58 (SKPS…HVKP). A disordered region spans residues 76–100 (ESTPPLLPTQEAAAPVTKSAPQRRE). A C3H1-type 3 zinc finger spans residues 164–191 (DAPQQLCPFAQAGGCHYGESCPYIHGNV). Residues 192-221 (CEICGLQVLHPYDQEQRGHHEKLCMANFER) form a makorin-type Cys-His region. The RING-type zinc finger occupies 237–291 (CSICMERVYDKQSPSERRFGILSNCHHTYCLACIRQWRCARQFENPVIKSCPECR). The C3H1-type 4 zinc finger occupies 320–349 (GMGKKACKYFDQGRGTCPFGGKCLYLHAYP).

The protein resides in the cytoplasm. The protein localises to the nucleus. It catalyses the reaction S-ubiquitinyl-[E2 ubiquitin-conjugating enzyme]-L-cysteine + [acceptor protein]-L-lysine = [E2 ubiquitin-conjugating enzyme]-L-cysteine + N(6)-ubiquitinyl-[acceptor protein]-L-lysine.. It functions in the pathway protein modification; protein ubiquitination. Functionally, E3 ubiquitin ligase catalyzing the covalent attachment of ubiquitin moieties onto substrate proteins. Inhibits neurogenesis and axis formation during embryonic development by modulating the phosphatidylinositol 3-kinase (PI3K) pathway. Acts downstream of PI3K and akt1 to up-regulate gsk3b mRNA expression. The sequence is that of E3 ubiquitin-protein ligase makorin-2 (mkrn2) from Xenopus tropicalis (Western clawed frog).